The chain runs to 1171 residues: DNA-directed RNA polymerase subunit beta (1171 aa).

It belongs to the RNA polymerase beta chain family. The RNAP catalytic core consists of 2 alpha, 1 beta, 1 beta' and 1 omega subunit. When a sigma factor is associated with the core the holoenzyme is formed, which can initiate transcription.

The catalysed reaction is RNA(n) + a ribonucleoside 5'-triphosphate = RNA(n+1) + diphosphate. In terms of biological role, DNA-dependent RNA polymerase catalyzes the transcription of DNA into RNA using the four ribonucleoside triphosphates as substrates. This chain is DNA-directed RNA polymerase subunit beta, found in Arthrobacter sp. (strain FB24).